Here is a 380-residue protein sequence, read N- to C-terminus: Protein COS12 (380 aa).

Over 1–70 (MDGAKFENTV…WKIRGKRHYL (70 aa)) the chain is Cytoplasmic. The chain crosses the membrane as a helical span at residues 71–91 (VIVTALMFEVLYFLWTYSYIF). Residues 92–231 (RERTLGKQVS…KLLWAFKEVT (140 aa)) are Extracellular-facing. A helical transmembrane segment spans residues 232–252 (IMNSRFAFFSIAYLNGLLTIP). Residues 253-257 (RLRNS) are Cytoplasmic-facing. A helical membrane pass occupies residues 258-278 (LHILYVCAVLSSMIIEYLIGI). The Extracellular segment spans residues 279-380 (DKFRFKSMNL…KEAQSACNDV (102 aa)).

The protein belongs to the DUP/COS family.

Its subcellular location is the membrane. This chain is Protein COS12 (COS12), found in Saccharomyces cerevisiae (strain ATCC 204508 / S288c) (Baker's yeast).